The following is a 438-amino-acid chain: GTPase Der (438 aa).

2 EngA-type G domains span residues 4–168 (PIVA…PKGY) and 177–352 (IRIA…TNYS). Residues 10-17 (GRPNVGKS), 57-61 (DTGGI), 120-123 (NKID), 183-190 (GKPNVGKS), 230-234 (DTAGL), and 295-298 (NKWD) each bind GTP. In terms of domain architecture, KH-like spans 353 to 437 (KRISTGVLND…GIKMEFRERK (85 aa)).

The protein belongs to the TRAFAC class TrmE-Era-EngA-EngB-Septin-like GTPase superfamily. EngA (Der) GTPase family. Associates with the 50S ribosomal subunit.

Functionally, GTPase that plays an essential role in the late steps of ribosome biogenesis. This is GTPase Der from Clostridium tetani (strain Massachusetts / E88).